Consider the following 204-residue polypeptide: Large ribosomal subunit protein uL4 (204 aa).

Positions 49–75 are disordered; it reads TKGRSDVSGGGKKPWRQKGRGGARAGS.

Belongs to the universal ribosomal protein uL4 family. Part of the 50S ribosomal subunit.

Functionally, one of the primary rRNA binding proteins, this protein initially binds near the 5'-end of the 23S rRNA. It is important during the early stages of 50S assembly. It makes multiple contacts with different domains of the 23S rRNA in the assembled 50S subunit and ribosome. Its function is as follows. Forms part of the polypeptide exit tunnel. This Campylobacter lari (strain RM2100 / D67 / ATCC BAA-1060) protein is Large ribosomal subunit protein uL4.